The following is an 85-amino-acid chain: Coiled-coil-helix-coiled-coil-helix domain-containing protein 7 (85 aa).

One can recognise a CHCH domain in the interval 13 to 55 (INPCLSESDASTRCMDENNYDRERCSSYFLKYKNCRRFWNSVM). 2 consecutive short sequence motifs (cx9C motif) follow at residues 16-26 (CLSESDASTRC) and 37-47 (CSSYFLKYKNC). Intrachain disulfides connect cysteine 16–cysteine 47 and cysteine 26–cysteine 37.

Belongs to the CHCHD7 family. Monomer.

The protein localises to the mitochondrion intermembrane space. The sequence is that of Coiled-coil-helix-coiled-coil-helix domain-containing protein 7 (Chchd7) from Mus musculus (Mouse).